We begin with the raw amino-acid sequence, 382 residues long: Protein NASP homolog 1 (382 aa).

Residues 1-39 are disordered; the sequence is MDTENIADASDIRVKDASGDSDEKGNGTTTEEETVEQKE. A compositionally biased stretch (basic and acidic residues) spans 10-25; it reads SDIRVKDASGDSDEKG. A TPR 1 repeat occupies 42 to 75; the sequence is LAELLAAGRRALKVNDIDKASDSLSEATELSSEI. Basic and acidic residues predominate over residues 103–112; that stretch reads QLLKGPGEKE. The disordered stretch occupies residues 103–151; that stretch reads QLLKGPGEKESGDEEQAGNSDDKTDEENGETEKEDGEESGEEEDDDDDT. Residues 125–150 show a composition bias toward acidic residues; it reads KTDEENGETEKEDGEESGEEEDDDDD. 2 TPR repeats span residues 191–224 and 233–266; these read ADVL…QRNV and AQTY…LIAR. A coiled-coil region spans residues 264-304; that stretch reads IARQTELKHELERGVDDKEKKSEFENELKELEEMMPGVEEM. The tract at residues 337–382 is disordered; the sequence is PQEAGDQKEANDISSLVRRPAKRAVDAPTDNQAVKKEKEEEGTTSI. Basic and acidic residues predominate over residues 369 to 382; sequence AVKKEKEEEGTTSI.

It belongs to the NASP family. As to quaternary structure, may interact with zinc finger protein tra-4 and histone deacetylase hda-1.

Its subcellular location is the nucleus. Promotes normal hermaphrodite (XX) development, in concert with zinc finger protein tra-4 and histone deacetylase hda-1, perhaps as components of a complex. May act redundantly with nasp-2. Involved in innate immune response to B.thuringiensis strain DB27 and S.aureus bacteria. May play a role in the uptake or spreading of dsRNA. The polypeptide is Protein NASP homolog 1 (Caenorhabditis elegans).